A 493-amino-acid polypeptide reads, in one-letter code: NADH-ubiquinone oxidoreductase 51 kDa subunit, mitochondrial (493 aa).

Residues 1 to 27 (MLSRTAAPTKASARTLSRAAAEQCRTF) constitute a mitochondrion transit peptide. 96–105 (GRGGAGFPSG) is an NAD(+) binding site. 212-259 (GAGAYVCGEETSLIESLEGKPGKPRLKPPFPAAVGLFGCPSTVANVET) provides a ligand contact to FMN. Positions 391, 394, 397, and 437 each coordinate [4Fe-4S] cluster.

Belongs to the complex I 51 kDa subunit family. As to quaternary structure, complex I is composed of about 40 different subunits. This is a component of the flavoprotein-sulfur (FP) fragment of the enzyme. The cofactor is FMN. It depends on [4Fe-4S] cluster as a cofactor.

It localises to the mitochondrion inner membrane. The catalysed reaction is a ubiquinone + NADH + 5 H(+)(in) = a ubiquinol + NAD(+) + 4 H(+)(out). Functionally, core subunit of the mitochondrial membrane respiratory chain NADH dehydrogenase (Complex I) that is believed to belong to the minimal assembly required for catalysis. Complex I functions in the transfer of electrons from NADH to the respiratory chain. The immediate electron acceptor for the enzyme is believed to be ubiquinone. This Neurospora crassa (strain ATCC 24698 / 74-OR23-1A / CBS 708.71 / DSM 1257 / FGSC 987) protein is NADH-ubiquinone oxidoreductase 51 kDa subunit, mitochondrial (nuo-51).